An 82-amino-acid chain; its full sequence is Sec-independent protein translocase protein TatA (82 aa).

A helical membrane pass occupies residues 1-21 (MGLSTTHLIIFLVIIVLIFGT).

This sequence belongs to the TatA/E family. In terms of assembly, the Tat system comprises two distinct complexes: a TatABC complex, containing multiple copies of TatA, TatB and TatC subunits, and a separate TatA complex, containing only TatA subunits. Substrates initially bind to the TatABC complex, which probably triggers association of the separate TatA complex to form the active translocon.

It localises to the cell inner membrane. Part of the twin-arginine translocation (Tat) system that transports large folded proteins containing a characteristic twin-arginine motif in their signal peptide across membranes. TatA could form the protein-conducting channel of the Tat system. The polypeptide is Sec-independent protein translocase protein TatA (Leptothrix cholodnii (strain ATCC 51168 / LMG 8142 / SP-6) (Leptothrix discophora (strain SP-6))).